The following is a 117-amino-acid chain: Small ribosomal subunit protein bS6 (117 aa).

A disordered region spans residues 96–117; the sequence is HDEGPSVQMQKRDEREGRRERR.

It belongs to the bacterial ribosomal protein bS6 family.

Binds together with bS18 to 16S ribosomal RNA. The sequence is that of Small ribosomal subunit protein bS6 from Jannaschia sp. (strain CCS1).